A 146-amino-acid polypeptide reads, in one-letter code: Hemoglobin subunit beta (146 aa).

The residue at position 1 (Val1) is an N-acetylvaline. The region spanning 2–146 is the Globin domain; that stretch reads HMTDAEKKLV…VANALAHKYH (145 aa). The residue at position 12 (Thr12) is a Phosphothreonine. N6-acetyllysine is present on Lys59. His63 provides a ligand contact to heme b. Lys82 carries the post-translational modification N6-acetyllysine. His92 contacts heme b. At Cys93 the chain carries S-nitrosocysteine. Lys144 bears the N6-acetyllysine mark.

The protein belongs to the globin family. As to quaternary structure, tetramer of two alpha and two different beta chains. Two external cysteine residues at beta-16 and beta-52 cause reversible polymerization to octamers and most likely irreversible formation of higher polymers. Red blood cells.

Functionally, involved in oxygen transport from the lung to the various peripheral tissues. The sequence is that of Hemoglobin subunit beta (HBB) from Echinops telfairi (Lesser hedgehog tenrec).